Here is a 163-residue protein sequence, read N- to C-terminus: Nucleotide-binding protein PC1_1036 (163 aa).

It belongs to the YajQ family.

Nucleotide-binding protein. The chain is Nucleotide-binding protein PC1_1036 from Pectobacterium carotovorum subsp. carotovorum (strain PC1).